We begin with the raw amino-acid sequence, 142 residues long: Small ribosomal subunit protein uS12 (142 aa).

The protein belongs to the universal ribosomal protein uS12 family. Part of the 30S ribosomal subunit.

Its function is as follows. With S4 and S5 plays an important role in translational accuracy. Located at the interface of the 30S and 50S subunits. The polypeptide is Small ribosomal subunit protein uS12 (Methanosarcina barkeri (strain Fusaro / DSM 804)).